The following is a 402-amino-acid chain: UPF0261 protein mll9388 (402 aa).

It belongs to the UPF0261 family.

The polypeptide is UPF0261 protein mll9388 (Mesorhizobium japonicum (strain LMG 29417 / CECT 9101 / MAFF 303099) (Mesorhizobium loti (strain MAFF 303099))).